A 477-amino-acid polypeptide reads, in one-letter code: Oleate hydroxylase FAH12 (477 aa).

The segment at 26-48 is disordered; the sequence is YESSAAVSPAESPRTSASSTSLS. Positions 27–48 are enriched in low complexity; it reads ESSAAVSPAESPRTSASSTSLS. The next 2 membrane-spanning stretches (helical) occupy residues 101 to 118 and 133 to 153; these read AYVL…YLFH and FVLW…LWVI. The Histidine box-1 motif lies at 155–159; the sequence is HECGH. Residues 167–187 traverse the membrane as a helical segment; sequence FISDLTGWVIHSALLVPYFSW. The short motif at 191–195 is the Histidine box-2 element; sequence HSAHH. Transmembrane regions (helical) follow at residues 234–254, 299–319, and 327–347; these read PIYT…SYLM, YIVL…YLGN, and AVWY…ITFL.

It belongs to the fatty acid desaturase type 1 family.

It is found in the microsome membrane. The catalysed reaction is (9Z)-octadecenoate + AH2 + O2 = (12R)-hydroxy-(9Z)-octadecenoate + A + H2O. Its pathway is lipid metabolism; monounsaturated fatty acid biosynthesis. Functionally, oleate hydroxylase involved in the biosynthesis of ricinoleate (12-hydroxy-cis-9-octadecenoate), that is present at high levels in C.purpurea sclerotium tissue. Exhibits delta(12) hydroxylase activity on 16C and 18C monounsaturated fatty acids (i.e. oleic and palmitoleic acids), and, to a lower extent, gamma(3) hydroxylase activity on ricinoleate. This Claviceps purpurea (Ergot fungus) protein is Oleate hydroxylase FAH12.